We begin with the raw amino-acid sequence, 378 residues long: Queuine tRNA-ribosyltransferase (378 aa).

Asp-89 acts as the Proton acceptor in catalysis. Substrate contacts are provided by residues 89-93, Asp-143, Gln-187, and Gly-214; that span reads DSGGF. The RNA binding stretch occupies residues 245 to 251; the sequence is GVGKPQD. Asp-264 (nucleophile) is an active-site residue. Positions 269-273 are RNA binding; important for wobble base 34 recognition; it reads TRNAR. The Zn(2+) site is built by Cys-302, Cys-304, Cys-307, and His-334.

Belongs to the queuine tRNA-ribosyltransferase family. As to quaternary structure, homodimer. Within each dimer, one monomer is responsible for RNA recognition and catalysis, while the other monomer binds to the replacement base PreQ1. It depends on Zn(2+) as a cofactor.

The enzyme catalyses 7-aminomethyl-7-carbaguanine + guanosine(34) in tRNA = 7-aminomethyl-7-carbaguanosine(34) in tRNA + guanine. It participates in tRNA modification; tRNA-queuosine biosynthesis. Catalyzes the base-exchange of a guanine (G) residue with the queuine precursor 7-aminomethyl-7-deazaguanine (PreQ1) at position 34 (anticodon wobble position) in tRNAs with GU(N) anticodons (tRNA-Asp, -Asn, -His and -Tyr). Catalysis occurs through a double-displacement mechanism. The nucleophile active site attacks the C1' of nucleotide 34 to detach the guanine base from the RNA, forming a covalent enzyme-RNA intermediate. The proton acceptor active site deprotonates the incoming PreQ1, allowing a nucleophilic attack on the C1' of the ribose to form the product. After dissociation, two additional enzymatic reactions on the tRNA convert PreQ1 to queuine (Q), resulting in the hypermodified nucleoside queuosine (7-(((4,5-cis-dihydroxy-2-cyclopenten-1-yl)amino)methyl)-7-deazaguanosine). This Blochmanniella floridana protein is Queuine tRNA-ribosyltransferase.